Here is a 204-residue protein sequence, read N- to C-terminus: High frequency lysogenization protein HflD homolog (204 aa).

Belongs to the HflD family.

Its subcellular location is the cytoplasm. The protein resides in the cell inner membrane. The polypeptide is High frequency lysogenization protein HflD homolog (Actinobacillus succinogenes (strain ATCC 55618 / DSM 22257 / CCUG 43843 / 130Z)).